A 121-amino-acid chain; its full sequence is Large ribosomal subunit protein bL19 (121 aa).

The protein belongs to the bacterial ribosomal protein bL19 family.

Its function is as follows. This protein is located at the 30S-50S ribosomal subunit interface and may play a role in the structure and function of the aminoacyl-tRNA binding site. The protein is Large ribosomal subunit protein bL19 of Mesomycoplasma hyopneumoniae (strain 7448) (Mycoplasma hyopneumoniae).